A 108-amino-acid polypeptide reads, in one-letter code: N(4)-acetylcytidine amidohydrolase (108 aa).

The ASCH domain occupies 5-102 (ITFFQRLERS…NDLFFISFRV (98 aa)). Residue Lys-20 is the Proton acceptor of the active site. Residue Thr-23 is the Nucleophile of the active site. The Proton donor role is filled by Glu-73.

Belongs to the N(4)-acetylcytidine amidohydrolase family.

The enzyme catalyses N(4)-acetylcytidine + H2O = cytidine + acetate + H(+). It catalyses the reaction N(4)-acetyl-2'-deoxycytidine + H2O = 2'-deoxycytidine + acetate + H(+). It carries out the reaction N(4)-acetylcytosine + H2O = cytosine + acetate + H(+). Catalyzes the hydrolysis of N(4)-acetylcytidine (ac4C). The protein is N(4)-acetylcytidine amidohydrolase of Moritella marina (Vibrio marinus).